The chain runs to 551 residues: Arginine--tRNA ligase (551 aa).

Residues 123–133 (ANPTGPLTIGR) carry the 'HIGH' region motif.

This sequence belongs to the class-I aminoacyl-tRNA synthetase family. As to quaternary structure, monomer.

It localises to the cytoplasm. The catalysed reaction is tRNA(Arg) + L-arginine + ATP = L-arginyl-tRNA(Arg) + AMP + diphosphate. The sequence is that of Arginine--tRNA ligase from Chlorobaculum parvum (strain DSM 263 / NCIMB 8327) (Chlorobium vibrioforme subsp. thiosulfatophilum).